A 230-amino-acid polypeptide reads, in one-letter code: V-type proton ATPase subunit E (230 aa).

This sequence belongs to the V-ATPase E subunit family. As to quaternary structure, V-ATPase is a heteromultimeric enzyme composed of a peripheral catalytic V1 complex (components A to H) attached to an integral membrane V0 proton pore complex (components: a, c, c', c'' and d).

In terms of biological role, subunit of the peripheral V1 complex of vacuolar ATPase essential for assembly or catalytic function. V-ATPase is responsible for acidifying a variety of intracellular compartments in eukaryotic cells. The chain is V-type proton ATPase subunit E (VATE) from Citrus unshiu (Satsuma mandarin).